The following is a 253-amino-acid chain: 3-deoxy-manno-octulosonate cytidylyltransferase (253 aa).

It belongs to the KdsB family.

The protein resides in the cytoplasm. It carries out the reaction 3-deoxy-alpha-D-manno-oct-2-ulosonate + CTP = CMP-3-deoxy-beta-D-manno-octulosonate + diphosphate. The protein operates within nucleotide-sugar biosynthesis; CMP-3-deoxy-D-manno-octulosonate biosynthesis; CMP-3-deoxy-D-manno-octulosonate from 3-deoxy-D-manno-octulosonate and CTP: step 1/1. It functions in the pathway bacterial outer membrane biogenesis; lipopolysaccharide biosynthesis. Activates KDO (a required 8-carbon sugar) for incorporation into bacterial lipopolysaccharide in Gram-negative bacteria. This Acinetobacter baumannii (strain SDF) protein is 3-deoxy-manno-octulosonate cytidylyltransferase.